Here is a 323-residue protein sequence, read N- to C-terminus: MKLKRLMAALTFVAAGVGAASAVAAIDPALPEYQKASGVSGNLSSVGSDTLANLMTMWAEEYKRLYPNVNIQIQAAGSSTAPPALTEGTANLGPMSRKMKDVELQAFEQKYGYKPTAVPVAVDALAIFVHKDNPIKGLTMQQVDAIFSATRLCGSKQDVKTWGDLGLTGDWAKKPVQLFGRNSVSGTYGYFKEEALCKGDFRPNVNEQPGSASVVQSVSQSLNGIGYSGIGYKTASVKTVALAKKEGAAFVEDNEQNALNGTYPLSRFLYVYVNKAPNKPLDPLEAQFLKLVLSKTGQQVVVKDGYIPLPAKVAEKAIKELGL.

An N-terminal signal peptide occupies residues 1–24; sequence MKLKRLMAALTFVAAGVGAASAVA.

It belongs to the PstS family.

The protein resides in the periplasm. Its subcellular location is the secreted. In terms of biological role, involved in the system for phosphate transport across the cytoplasmic membrane. The ability of PstS to bind phosphate may allow it to acquire phosphate from its host. This is Phosphate-binding protein PstS (pstS) from Pseudomonas aeruginosa (strain UCBPP-PA14).